The primary structure comprises 466 residues: Adenosylhomocysteinase (466 aa).

Residues T57, D132, and E192 each coordinate substrate. 193-195 (TTT) is a binding site for NAD(+). Positions 222 and 226 each coordinate substrate. Residues N227, 256 to 261 (GYGDVG), E279, N314, 335 to 337 (IGH), and N380 each bind NAD(+).

The protein belongs to the adenosylhomocysteinase family. It depends on NAD(+) as a cofactor.

The protein resides in the cytoplasm. It carries out the reaction S-adenosyl-L-homocysteine + H2O = L-homocysteine + adenosine. The protein operates within amino-acid biosynthesis; L-homocysteine biosynthesis; L-homocysteine from S-adenosyl-L-homocysteine: step 1/1. Its function is as follows. May play a key role in the regulation of the intracellular concentration of adenosylhomocysteine. In Brucella melitensis biotype 2 (strain ATCC 23457), this protein is Adenosylhomocysteinase.